A 910-amino-acid chain; its full sequence is Ubiquitin carboxyl-terminal hydrolase 9 (910 aa).

In terms of domain architecture, DUSP spans 19–134 (TTPEEEKRIV…GGPPIERKLI (116 aa)). A disordered region spans residues 68–89 (ISGESSEASRPGPIDNHDIIES). One can recognise a USP domain in the interval 303-894 (AGLSNLGNTC…AAYVLFYRRV (592 aa)). C312 functions as the Nucleophile in the catalytic mechanism. The Proton acceptor role is filled by H852.

It belongs to the peptidase C19 family.

The enzyme catalyses Thiol-dependent hydrolysis of ester, thioester, amide, peptide and isopeptide bonds formed by the C-terminal Gly of ubiquitin (a 76-residue protein attached to proteins as an intracellular targeting signal).. Its function is as follows. Recognizes and hydrolyzes the peptide bond at the C-terminal Gly of ubiquitin. Involved in the processing of poly-ubiquitin precursors as well as that of ubiquitinated proteins. The polypeptide is Ubiquitin carboxyl-terminal hydrolase 9 (UBP9) (Arabidopsis thaliana (Mouse-ear cress)).